We begin with the raw amino-acid sequence, 565 residues long: Ubiquitin carboxyl-terminal hydrolase 39 (565 aa).

Basic and acidic residues-rich tracts occupy residues 1-21 (MSGRSKRESRGSTRGKRESES) and 28-39 (VKRERDREREPE). Disordered regions lie at residues 1–61 (MSGR…SARE) and 75–95 (EREVDEDSEPEREVRAKNGRV). Ser-46 is modified (phosphoserine). A Glycyl lysine isopeptide (Lys-Gly) (interchain with G-Cter in SUMO2) cross-link involves residue Lys-51. Residue Ser-82 is modified to Phosphoserine. Residues 85-95 (EREVRAKNGRV) show a composition bias toward basic and acidic residues. A UBP-type; degenerate zinc finger spans residues 103-200 (RHCPYLDTIN…YVLKPTFTKQ (98 aa)). The Zn(2+) site is built by Cys-136, Cys-139, His-155, and His-161. The USP domain occupies 225–555 (VGLNNIKAND…EAYIQIWKRR (331 aa)).

It belongs to the peptidase C19 family. As to quaternary structure, the U4/U6-U5 tri-snRNP complex is a building block of the precatalytic spliceosome (spliceosome B complex). Component of the U4/U6-U5 tri-snRNP complex composed of the U4, U6 and U5 snRNAs and at least PRPF3, PRPF4, PRPF6, PRPF8, PRPF31, SNRNP200, TXNL4A, SNRNP40, SNRPB, SNRPD1, SNRPD2, SNRPD3, SNRPE, SNRPF, SNRPG, DDX23, CD2BP2, PPIH, SNU13, EFTUD2, SART1 and USP39, plus LSM2, LSM3, LSM4, LSM5, LSM6, LSM7 and LSM8.

The protein localises to the nucleus. The catalysed reaction is Thiol-dependent hydrolysis of ester, thioester, amide, peptide and isopeptide bonds formed by the C-terminal Gly of ubiquitin (a 76-residue protein attached to proteins as an intracellular targeting signal).. Its function is as follows. Deubiquitinating enzyme that plays a role in many cellular processes including cellular antiviral response, epithelial morphogenesis, DNA repair or B-cell development. Plays a role in pre-mRNA splicing as a component of the U4/U6-U5 tri-snRNP, one of the building blocks of the precatalytic spliceosome. Specifically regulates immunoglobulin gene rearrangement in a spliceosome-dependent manner, which involves modulating chromatin interactions at the Igh locus and therefore plays an essential role in B-cell development. Regulates AURKB mRNA levels, and thereby plays a role in cytokinesis and in the spindle checkpoint. Regulates apoptosis and G2/M cell cycle checkpoint in response to DNA damage by deubiquitinating and stabilizing CHK2. Also plays an important role in DNA repair by controlling the recruitment of XRCC4/LIG4 to DNA double-strand breaks for non-homologous end-joining repair. Participates in antiviral activity by affecting the type I IFN signaling by stabilizing STAT1 and decreasing its 'Lys-6'-linked ubiquitination. Contributes to non-canonical Wnt signaling during epidermal differentiation. Acts as a negative regulator NF-kappa-B activation through deubiquitination of 'Lys-48'-linked ubiquitination of NFKBIA. The sequence is that of Ubiquitin carboxyl-terminal hydrolase 39 from Homo sapiens (Human).